We begin with the raw amino-acid sequence, 938 residues long: Isoleucine--tRNA ligase (938 aa).

The short motif at 58–68 is the 'HIGH' region element; it reads PYANGSIHIGH. Glutamate 561 is a binding site for L-isoleucyl-5'-AMP. Positions 602–606 match the 'KMSKS' region motif; it reads KMSKS. Lysine 605 provides a ligand contact to ATP. Zn(2+)-binding residues include cysteine 901, cysteine 904, cysteine 921, and cysteine 924.

Belongs to the class-I aminoacyl-tRNA synthetase family. IleS type 1 subfamily. As to quaternary structure, monomer. Requires Zn(2+) as cofactor.

The protein resides in the cytoplasm. It carries out the reaction tRNA(Ile) + L-isoleucine + ATP = L-isoleucyl-tRNA(Ile) + AMP + diphosphate. Functionally, catalyzes the attachment of isoleucine to tRNA(Ile). As IleRS can inadvertently accommodate and process structurally similar amino acids such as valine, to avoid such errors it has two additional distinct tRNA(Ile)-dependent editing activities. One activity is designated as 'pretransfer' editing and involves the hydrolysis of activated Val-AMP. The other activity is designated 'posttransfer' editing and involves deacylation of mischarged Val-tRNA(Ile). This is Isoleucine--tRNA ligase from Baumannia cicadellinicola subsp. Homalodisca coagulata.